The chain runs to 301 residues: Acetylglutamate kinase (301 aa).

Substrate is bound by residues 68–69 (GG), R90, and N195.

The protein belongs to the acetylglutamate kinase family. ArgB subfamily.

The protein resides in the cytoplasm. It catalyses the reaction N-acetyl-L-glutamate + ATP = N-acetyl-L-glutamyl 5-phosphate + ADP. It functions in the pathway amino-acid biosynthesis; L-arginine biosynthesis; N(2)-acetyl-L-ornithine from L-glutamate: step 2/4. In terms of biological role, catalyzes the ATP-dependent phosphorylation of N-acetyl-L-glutamate. The protein is Acetylglutamate kinase of Pseudomonas putida (strain W619).